A 218-amino-acid chain; its full sequence is MGQKINPIGFRLGTTQGHHSLWFAQPKNYSEGLQEDKKIRTYIQNYVQKNMKTSSGVEGIARIEIQKRIDLIQIIIYMGFPKILIESRPRGIEELQMNLQKEFHSVNRKLNIAITRIEKPYGNPNILAEFIAGQLKNRVSFRKAMKKAIELTEQADTKGIQVQIAGRIDGKEIARVEWIREGRVPLQTIRAKIDYCCYTVRTIYGVLGIKIWIFIDGE.

The KH type-2 domain occupies 47 to 118 (VQKNMKTSSG…KLNIAITRIE (72 aa)).

The protein belongs to the universal ribosomal protein uS3 family. In terms of assembly, part of the 30S ribosomal subunit.

The protein resides in the plastid. It is found in the chloroplast. This chain is Small ribosomal subunit protein uS3c (rps3), found in Lactuca sativa (Garden lettuce).